The following is a 433-amino-acid chain: 3-phosphoshikimate 1-carboxyvinyltransferase (433 aa).

Residues lysine 22, serine 23, and arginine 27 each coordinate 3-phosphoshikimate. Phosphoenolpyruvate is bound at residue lysine 22. Residues glycine 95 and arginine 123 each coordinate phosphoenolpyruvate. Positions 167, 169, 315, and 342 each coordinate 3-phosphoshikimate. A phosphoenolpyruvate-binding site is contributed by glutamine 169. The Proton acceptor role is filled by aspartate 315. Positions 346 and 387 each coordinate phosphoenolpyruvate.

The protein belongs to the EPSP synthase family. In terms of assembly, monomer.

The protein localises to the cytoplasm. The enzyme catalyses 3-phosphoshikimate + phosphoenolpyruvate = 5-O-(1-carboxyvinyl)-3-phosphoshikimate + phosphate. It functions in the pathway metabolic intermediate biosynthesis; chorismate biosynthesis; chorismate from D-erythrose 4-phosphate and phosphoenolpyruvate: step 6/7. In terms of biological role, catalyzes the transfer of the enolpyruvyl moiety of phosphoenolpyruvate (PEP) to the 5-hydroxyl of shikimate-3-phosphate (S3P) to produce enolpyruvyl shikimate-3-phosphate and inorganic phosphate. The chain is 3-phosphoshikimate 1-carboxyvinyltransferase from Legionella pneumophila subsp. pneumophila (strain Philadelphia 1 / ATCC 33152 / DSM 7513).